The primary structure comprises 59 residues: Large ribosomal subunit protein uL30 (59 aa).

It belongs to the universal ribosomal protein uL30 family. Part of the 50S ribosomal subunit.

This is Large ribosomal subunit protein uL30 from Citrifermentans bemidjiense (strain ATCC BAA-1014 / DSM 16622 / JCM 12645 / Bem) (Geobacter bemidjiensis).